The following is a 632-amino-acid chain: MTHEFTESYDVIVIGAGHAGVEASLATSRMGCKTLLATINLDMLAFMPCNPSIGGSAKGIVVREIDALGGEMGKNIDKTYIQMKMLNTGKGPAVRALRAQADKSLYAREMKHTVEKQANLTLRQTMIDDILVEDGRVVGVLTATGQKFAAKAVVVTTGTALRGEIILGELKYSSGPNNSLASVTLADNLKKLGLEIGRFKTGTPPRVKASSINYDQTEIQPGDDKPNHFSFMSKDADYLKDQIPCWLTYTNQTSHDIINQNLYRAPMFSGIVKGVGPRYCPSIEDKIVRFADKERHQLFLEPEGRDTEEVYVQGLSTSLPEDVQKDLIHSIKGLEKAEMMRTGYAIEYDIVLPHQLRATLETKLISGLFTAGQTNGTSGYEEAAGQGLIAGINAALKVQGKPELILKRSDAYIGVMIDDLVTKGTLEPYRLLTSRAEYRLILRHDNADMRLTEIGRDIGLVDDERWKAFEIKKNQFDNELKRLNSIKLKPVKATNDRVQELGFKPLTDAMTAKEFMRRPEIDYATAVSFVGPAAEDLDAKIIELLETEIKYEGYIRKALDQVAKMKRMEEKRIPANIDWDAIDSIATEARQKFKKINPETIGQASRISGVNPADISILMIYLEGNGKAHRKY.

FAD-binding positions include 15-20 (GAGHAG), isoleucine 127, and serine 182. 276-290 (GPRYCPSIEDKIVRF) lines the NAD(+) pocket. An FAD-binding site is contributed by glutamine 373.

The protein belongs to the MnmG family. Homodimer. Heterotetramer of two MnmE and two MnmG subunits. Requires FAD as cofactor.

Its subcellular location is the cytoplasm. NAD-binding protein involved in the addition of a carboxymethylaminomethyl (cmnm) group at the wobble position (U34) of certain tRNAs, forming tRNA-cmnm(5)s(2)U34. The protein is tRNA uridine 5-carboxymethylaminomethyl modification enzyme MnmG of Streptococcus pyogenes serotype M12 (strain MGAS2096).